The chain runs to 533 residues: Protein trichome birefringence-like 18 (533 aa).

A helical; Signal-anchor for type II membrane protein membrane pass occupies residues 21–41; sequence VSTVAIAIGGLASFFVFGLLL. The disordered stretch occupies residues 93 to 171; the sequence is SDSSSGLPVV…PDDVSETASA (79 aa). A compositionally biased stretch (basic and acidic residues) spans 113–154; that stretch reads SSDRKLETPLTQEKEDLVSSDITEKTDVQSGERETNVSKAED. The GDS motif signature appears at 248–250; that stretch reads GDS. Residues 475-502 are disordered; sequence HDGHPGPFRSPDPNKITKRGPDGRPPPQ. The short motif at 503–517 is the DCXHWCLPGXXDXWN motif element; it reads DCLHWCMPGPVDTWN.

The protein belongs to the PC-esterase family. TBL subfamily.

The protein resides in the membrane. May act as a bridging protein that binds pectin and other cell wall polysaccharides. Probably involved in maintaining esterification of pectins. May be involved in the specific O-acetylation of cell wall polymers. The protein is Protein trichome birefringence-like 18 (TBL18) of Arabidopsis thaliana (Mouse-ear cress).